Consider the following 730-residue polypeptide: Propionyl-CoA carboxylase alpha chain, mitochondrial (730 aa).

The N-terminal 52 residues, 1–52 (MAGLWVGGSVLVAAGRRGSRSPRPLMRSVALWTLKHVPQYSRQRLLVSRSLC), are a transit peptide targeting the mitochondrion. A Biotin carboxylation domain is found at 62–509 (TFDKILIANR…NTKFLSDVYP (448 aa)). Position 65 is an N6-acetyllysine; alternate (Lys65). Lys65 bears the N6-succinyllysine; alternate mark. Lys119 is modified (N6-succinyllysine). The residue at position 150 (Lys150) is an N6-acetyllysine; alternate. Residue Lys150 is modified to N6-succinyllysine; alternate. N6-acetyllysine is present on Lys154. Lys177 serves as a coordination point for ATP. Residues 181–378 (KLLAKKAKVN…LVQEMIRVAK (198 aa)) enclose the ATP-grasp domain. An N6-succinyllysine modification is found at Lys188. Lys200 carries the post-translational modification N6-acetyllysine; alternate. Lys200 bears the N6-succinyllysine; alternate mark. ATP contacts are provided by residues 209-270 (AREI…PRHI), Glu261, and Asn296. At Ser252 the chain carries Phosphoserine. Position 262 is an N6-succinyllysine (Lys262). The Mg(2+) site is built by Glu336, Glu349, and Asn351. Residues Glu336, Glu349, and Asn351 each contribute to the Mn(2+) site. Residue Glu349 is part of the active site. Position 407 is an N6-succinyllysine (Lys407). Phe409 contributes to the biotin binding site. Residues Lys502, Lys513, and Lys650 each carry the N6-succinyllysine modification. A Biotinyl-binding domain is found at 655–730 (KAAEDTSSIL…GEGDLLVELE (76 aa)). Lys696 is modified (N6-biotinyllysine).

As to quaternary structure, the holoenzyme is a dodecamer composed of 6 PCCA/alpha subunits and 6 PCCB/beta subunits. Interacts (via the biotin carboxylation domain) with SIRT4. Interacts with SIRT3 and SIRT5. It depends on Mg(2+) as a cofactor. Mn(2+) is required as a cofactor. The cofactor is biotin. In terms of processing, acetylated. Post-translationally, the biotin cofactor is covalently attached to the C-terminal biotinyl-binding domain and is required for the catalytic activity. Biotinylation is catalyzed by HLCS.

The protein resides in the mitochondrion matrix. The enzyme catalyses propanoyl-CoA + hydrogencarbonate + ATP = (S)-methylmalonyl-CoA + ADP + phosphate + H(+). The catalysed reaction is butanoyl-CoA + hydrogencarbonate + ATP = (2S)-ethylmalonyl-CoA + ADP + phosphate + H(+). It functions in the pathway metabolic intermediate metabolism; propanoyl-CoA degradation; succinyl-CoA from propanoyl-CoA: step 1/3. Its function is as follows. This is one of the 2 subunits of the biotin-dependent propionyl-CoA carboxylase (PCC), a mitochondrial enzyme involved in the catabolism of odd chain fatty acids, branched-chain amino acids isoleucine, threonine, methionine, and valine and other metabolites. Propionyl-CoA carboxylase catalyzes the carboxylation of propionyl-CoA/propanoyl-CoA to D-methylmalonyl-CoA/(S)-methylmalonyl-CoA. Within the holoenzyme, the alpha subunit catalyzes the ATP-dependent carboxylation of the biotin carried by the biotin carboxyl carrier (BCC) domain, while the beta subunit then tranfers the carboxyl group from carboxylated biotin to propionyl-CoA. Propionyl-CoA carboxylase also significantly acts on butyryl-CoA/butanoyl-CoA, which is converted to ethylmalonyl-CoA/(2S)-ethylmalonyl-CoA at a much lower rate. Other alternative minor substrates include (2E)-butenoyl-CoA/crotonoyl-CoA. This Sus scrofa (Pig) protein is Propionyl-CoA carboxylase alpha chain, mitochondrial.